A 125-amino-acid polypeptide reads, in one-letter code: Small ribosomal subunit protein uS13 (125 aa).

A disordered region spans residues 93-125; that stretch reads RKGLPVRGQRTKTNARTRKGPKRTVAGKKKAGR.

It belongs to the universal ribosomal protein uS13 family. In terms of assembly, part of the 30S ribosomal subunit. Forms a loose heterodimer with protein S19. Forms two bridges to the 50S subunit in the 70S ribosome.

Functionally, located at the top of the head of the 30S subunit, it contacts several helices of the 16S rRNA. In the 70S ribosome it contacts the 23S rRNA (bridge B1a) and protein L5 of the 50S subunit (bridge B1b), connecting the 2 subunits; these bridges are implicated in subunit movement. Contacts the tRNAs in the A and P-sites. In Paenarthrobacter aurescens (strain TC1), this protein is Small ribosomal subunit protein uS13.